Consider the following 142-residue polypeptide: 3-hydroxyacyl-[acyl-carrier-protein] dehydratase FabZ (142 aa).

The active site involves H46.

This sequence belongs to the thioester dehydratase family. FabZ subfamily.

Its subcellular location is the cytoplasm. The enzyme catalyses a (3R)-hydroxyacyl-[ACP] = a (2E)-enoyl-[ACP] + H2O. Involved in unsaturated fatty acids biosynthesis. Catalyzes the dehydration of short chain beta-hydroxyacyl-ACPs and long chain saturated and unsaturated beta-hydroxyacyl-ACPs. This is 3-hydroxyacyl-[acyl-carrier-protein] dehydratase FabZ from Thermus thermophilus (strain ATCC BAA-163 / DSM 7039 / HB27).